A 187-amino-acid chain; its full sequence is ATP synthase subunit delta, chloroplastic (187 aa).

The protein belongs to the ATPase delta chain family. As to quaternary structure, F-type ATPases have 2 components, F(1) - the catalytic core - and F(0) - the membrane proton channel. F(1) has five subunits: alpha(3), beta(3), gamma(1), delta(1), epsilon(1). CF(0) has four main subunits: a(1), b(1), b'(1) and c(10-14). The alpha and beta chains form an alternating ring which encloses part of the gamma chain. F(1) is attached to F(0) by a central stalk formed by the gamma and epsilon chains, while a peripheral stalk is formed by the delta, b and b' chains.

Its subcellular location is the plastid. The protein localises to the chloroplast thylakoid membrane. In terms of biological role, f(1)F(0) ATP synthase produces ATP from ADP in the presence of a proton or sodium gradient. F-type ATPases consist of two structural domains, F(1) containing the extramembraneous catalytic core and F(0) containing the membrane proton channel, linked together by a central stalk and a peripheral stalk. During catalysis, ATP synthesis in the catalytic domain of F(1) is coupled via a rotary mechanism of the central stalk subunits to proton translocation. This protein is part of the stalk that links CF(0) to CF(1). It either transmits conformational changes from CF(0) to CF(1) or is implicated in proton conduction. The protein is ATP synthase subunit delta, chloroplastic of Trieres chinensis (Marine centric diatom).